A 389-amino-acid polypeptide reads, in one-letter code: Probable nitrate transporter NarT (389 aa).

The next 12 helical transmembrane spans lie at 14-34 (TLSLVVGFMAWSIIAPLMPFI), 45-65 (ISIILAIPVILGSVLRVPFGY), 69-89 (IVGAKWVFFTSFIVLLFPIFF), 97-117 (GMLMASGFFLGVGGAIFSVGV), 139-159 (GNIGTAVSSFLAPPIAGIIGW), 161-181 (TTVRSYLIIIALFALIMFIFG), 211-231 (WYFITFGAFVAFGIFLPNYLV), 246-266 (GVFIALATFLRPIGGILGDKF), 268-288 (AVKVLMIDFVIMIIGAVILGI), 294-314 (LFTVGCLTISICAGIGNGLIF), 331-351 (IVSMMGGLGGFFPPLVITYVA), and 353-373 (LTGSSHLAFIFLAVFGCIALF).

The protein belongs to the major facilitator superfamily. Nitrate/nitrite porter (TC 2.A.1.8) family.

The protein resides in the cell membrane. Functionally, probably required for nitrate uptake under anoxic conditions. Also possibly involved in excretion of nitrite produced by the dissimilatory reduction of nitrate. This Staphylococcus aureus (strain JH9) protein is Probable nitrate transporter NarT (narT).